We begin with the raw amino-acid sequence, 506 residues long: Alpha-L-arabinofuranosidase B (506 aa).

Residues 1–26 (MSSGLSLERACAVALGIVASASLVAA) form the signal peptide. The catalytic stretch occupies residues 27–343 (GPCDIYSSGG…ADIVAAKYAI (317 aa)). Disulfide bonds link C29-C39, C89-C94, and C184-C185. The N-linked (GlcNAc...) asparagine glycan is linked to N91. D227 provides a ligand contact to substrate. E229 (nucleophile) is an active-site residue. Positions 230 and 304 each coordinate substrate. D305 functions as the Proton donor in the catalytic mechanism. The interval 344 to 506 (ASLTSGPALT…VSWVVSTGFA (163 aa)) is ABD. C409 and C447 form a disulfide bridge. 8 residues coordinate substrate: H424, N426, F427, D443, H471, E473, L476, and D496.

Belongs to the glycosyl hydrolase 54 family.

Its subcellular location is the secreted. It catalyses the reaction Hydrolysis of terminal non-reducing alpha-L-arabinofuranoside residues in alpha-L-arabinosides.. It functions in the pathway glycan metabolism; L-arabinan degradation. Its function is as follows. Alpha-L-arabinofuranosidase involved in the degradation of arabinoxylan, a major component of plant hemicellulose. Able to hydrolyze 1,5-, 1,3- and 1,2-alpha-linkages not only in L-arabinofuranosyl oligosaccharides, but also in polysaccharides containing terminal non-reducing L-arabinofuranoses in side chains, like L-arabinan, arabinogalactan and arabinoxylan. The protein is Alpha-L-arabinofuranosidase B (abfB) of Aspergillus oryzae (strain ATCC 42149 / RIB 40) (Yellow koji mold).